Reading from the N-terminus, the 422-residue chain is Imidazolonepropionase (422 aa).

Residues H82 and H84 each contribute to the Fe(3+) site. The Zn(2+) site is built by H82 and H84. The 4-imidazolone-5-propanoate site is built by R91, Y154, and H187. N-formimidoyl-L-glutamate is bound at residue Y154. H252 is a Fe(3+) binding site. H252 provides a ligand contact to Zn(2+). E255 provides a ligand contact to 4-imidazolone-5-propanoate. D327 serves as a coordination point for Fe(3+). Residue D327 coordinates Zn(2+). N329 and G331 together coordinate N-formimidoyl-L-glutamate. S332 serves as a coordination point for 4-imidazolone-5-propanoate.

It belongs to the metallo-dependent hydrolases superfamily. HutI family. Zn(2+) is required as a cofactor. Fe(3+) serves as cofactor.

It is found in the cytoplasm. It carries out the reaction 4-imidazolone-5-propanoate + H2O = N-formimidoyl-L-glutamate. The protein operates within amino-acid degradation; L-histidine degradation into L-glutamate; N-formimidoyl-L-glutamate from L-histidine: step 3/3. Functionally, catalyzes the hydrolytic cleavage of the carbon-nitrogen bond in imidazolone-5-propanoate to yield N-formimidoyl-L-glutamate. It is the third step in the universal histidine degradation pathway. This chain is Imidazolonepropionase, found in Alkaliphilus oremlandii (strain OhILAs) (Clostridium oremlandii (strain OhILAs)).